The following is a 252-amino-acid chain: 5-oxoprolinase subunit A 1 (252 aa).

The protein belongs to the LamB/PxpA family. In terms of assembly, forms a complex composed of PxpA, PxpB and PxpC.

It catalyses the reaction 5-oxo-L-proline + ATP + 2 H2O = L-glutamate + ADP + phosphate + H(+). Catalyzes the cleavage of 5-oxoproline to form L-glutamate coupled to the hydrolysis of ATP to ADP and inorganic phosphate. This chain is 5-oxoprolinase subunit A 1, found in Pseudomonas putida (strain ATCC 47054 / DSM 6125 / CFBP 8728 / NCIMB 11950 / KT2440).